Reading from the N-terminus, the 348-residue chain is MSLQDRLTELRDQGLADIKSADVLKKVNQVKVDLLGKKGPITEVLRGMRDLSPEERPKVGAYANEVRDRIQAAIDERREELEQAAVNEQLAAEKLDVTLPGREVPQGQPHVITQIITELEDLFMGMGYQIVDGDEVEEDYYNFERLNLPKDHPARDMQDTFYITKDVLLRTQTSADQPRSLENHDFSKGPLKVLSPGRVYRRDTDDATHSHQFHQIEGLVVDKHITMADLKGTLILVAKTLFGDQFDVRLRPSFFPFTEPSVEADVTCFNCNGKGCAICKQTGWIEVLGAGMVHPHVLEMSGIDPEEYGGFAFGLGPDRFAMLKYGVDDIRNFYLNDVRFLSQFYKKG.

E259 contacts Mg(2+).

Belongs to the class-II aminoacyl-tRNA synthetase family. Phe-tRNA synthetase alpha subunit type 1 subfamily. As to quaternary structure, tetramer of two alpha and two beta subunits. Requires Mg(2+) as cofactor.

The protein localises to the cytoplasm. It carries out the reaction tRNA(Phe) + L-phenylalanine + ATP = L-phenylalanyl-tRNA(Phe) + AMP + diphosphate + H(+). This Lactiplantibacillus plantarum (strain ATCC BAA-793 / NCIMB 8826 / WCFS1) (Lactobacillus plantarum) protein is Phenylalanine--tRNA ligase alpha subunit.